A 288-amino-acid chain; its full sequence is Transmembrane and coiled-coil domain-containing protein 5A (288 aa).

A coiled-coil region spans residues K10–E189. A helical membrane pass occupies residues S227–I249.

The protein belongs to the TMCO5 family. Only detected in testis (at protein level).

The protein localises to the endoplasmic reticulum membrane. Its subcellular location is the nucleus membrane. The sequence is that of Transmembrane and coiled-coil domain-containing protein 5A (Tmco5a) from Mus musculus (Mouse).